The following is a 329-amino-acid chain: GTPase Obg (329 aa).

The region spanning 1–159 (MQFIDQARIT…WFLQLELKLL (159 aa)) is the Obg domain. The OBG-type G domain occupies 160-328 (AEVGIIGLPN…LLAQVWKELG (169 aa)). Residues 166–173 (GLPNAGKS), 191–195 (FTTLV), 213–216 (DIPG), 280–283 (NKQE), and 309–311 (SAA) each bind ATP. 2 residues coordinate Mg(2+): Ser173 and Thr193.

The protein belongs to the TRAFAC class OBG-HflX-like GTPase superfamily. OBG GTPase family. In terms of assembly, monomer. The cofactor is Mg(2+).

Its subcellular location is the cytoplasm. Functionally, an essential GTPase which binds GTP, GDP and possibly (p)ppGpp with moderate affinity, with high nucleotide exchange rates and a fairly low GTP hydrolysis rate. Plays a role in control of the cell cycle, stress response, ribosome biogenesis and in those bacteria that undergo differentiation, in morphogenesis control. The chain is GTPase Obg from Prochlorococcus marinus (strain MIT 9303).